The primary structure comprises 329 residues: Indolepyruvate C-methyltransferase (329 aa).

The protein belongs to the methyltransferase superfamily.

It catalyses the reaction indole-3-pyruvate + S-adenosyl-L-methionine = (R)-3-(indol-3-yl)-2-oxobutanoate + S-adenosyl-L-homocysteine + H(+). Its activity is regulated as follows. Strongly inhibited by the thiol reagents p-chloromercuribenzoate and N-ethylmaleimide. Partially inhibited by o-phenanthroline and 2,2'-dipyridyl. Competitively inhibited by L-tryptophan and indolmycin. Involved in the biosynthesis of the antibiotic indolmycin, an inhibitor of the bacterial tryptophan-tRNA synthetases. Catalyzes the transfer of a methyl group from S-adenosyl-L-methionine to position 3 of the aliphatic side chain of (indol-3-yl)pyruvate to yield 3-methylindolepyruvate. The chain is Indolepyruvate C-methyltransferase from Streptomyces griseus.